A 429-amino-acid chain; its full sequence is Alanine aminotransferase (429 aa).

G65 and N204 together coordinate L-alanine. Residue K265 is modified to N6-(pyridoxal phosphate)lysine. Residue R403 coordinates L-alanine.

The protein belongs to the class-I pyridoxal-phosphate-dependent aminotransferase family. In terms of assembly, homodimer. Pyridoxal 5'-phosphate serves as cofactor.

It is found in the cytoplasm. The catalysed reaction is L-alanine + 2-oxoglutarate = pyruvate + L-glutamate. This chain is Alanine aminotransferase (aspC), found in Mycobacterium bovis (strain ATCC BAA-935 / AF2122/97).